Consider the following 194-residue polypeptide: Fe/S biogenesis protein NfuA (194 aa).

Positions 152 and 155 each coordinate [4Fe-4S] cluster.

It belongs to the NfuA family. As to quaternary structure, homodimer. Requires [4Fe-4S] cluster as cofactor.

Involved in iron-sulfur cluster biogenesis. Binds a 4Fe-4S cluster, can transfer this cluster to apoproteins, and thereby intervenes in the maturation of Fe/S proteins. Could also act as a scaffold/chaperone for damaged Fe/S proteins. The polypeptide is Fe/S biogenesis protein NfuA (Ectopseudomonas mendocina (strain ymp) (Pseudomonas mendocina)).